Consider the following 386-residue polypeptide: Succinate--CoA ligase [ADP-forming] subunit beta (386 aa).

The ATP-grasp domain occupies 9-244 (KEVLRKYGVA…LDEEDPKEIE (236 aa)). Residues Lys-46, 53–55 (GRG), Glu-99, Cys-102, and Glu-107 contribute to the ATP site. Mg(2+)-binding residues include Asn-199 and Asp-213. Residues Asn-264 and 321–323 (GIM) each bind substrate.

It belongs to the succinate/malate CoA ligase beta subunit family. In terms of assembly, heterotetramer of two alpha and two beta subunits. Mg(2+) serves as cofactor.

The enzyme catalyses succinate + ATP + CoA = succinyl-CoA + ADP + phosphate. The catalysed reaction is GTP + succinate + CoA = succinyl-CoA + GDP + phosphate. It participates in carbohydrate metabolism; tricarboxylic acid cycle; succinate from succinyl-CoA (ligase route): step 1/1. Its function is as follows. Succinyl-CoA synthetase functions in the citric acid cycle (TCA), coupling the hydrolysis of succinyl-CoA to the synthesis of either ATP or GTP and thus represents the only step of substrate-level phosphorylation in the TCA. The beta subunit provides nucleotide specificity of the enzyme and binds the substrate succinate, while the binding sites for coenzyme A and phosphate are found in the alpha subunit. In Bacillus licheniformis (strain ATCC 14580 / DSM 13 / JCM 2505 / CCUG 7422 / NBRC 12200 / NCIMB 9375 / NCTC 10341 / NRRL NRS-1264 / Gibson 46), this protein is Succinate--CoA ligase [ADP-forming] subunit beta.